We begin with the raw amino-acid sequence, 347 residues long: MNPPILAIVMSTVISGTIMVLISSHWLTIWIGFEMNMLAIIPILMKKFNPRAMEASTKYFLTQATASMLLMLGIIINLLLTGQWTVLNMPNPVASNMMTAALAMKLGLSPFHFWVPEVTQGVPMSSGMILLTWQKIAPLSILYQIAPSMNPNLLMAMAIMSVLVGGWGGLNQTQLRKILAYSSIAHMGWMIAVTTYNPTLMLLNLTIYITMTLGTFMLFMLNSSTTTLSLSHTWNKLPLIASLILMTMLSLGGLPPLSGFIPKWMIIHELTKNDMAIMATFMAMTALLNLYFYMRLTYATALTMFPSTNIMKMKWQFESTKNTTLLPPLIMISTMLLPLTPMVLTLF.

9 helical membrane-spanning segments follow: residues 5–22, 26–45, 60–80, 150–170, 178–198, 200–220, 237–257, 274–294, and 327–347; these read ILAI…MVLI, WLTI…PILM, FLTQ…NLLL, NPNL…WGGL, ILAY…TYNP, LMLL…MLFM, LPLI…LPPL, DMAI…YFYM, and PPLI…LTLF.

It belongs to the complex I subunit 2 family. In terms of assembly, core subunit of respiratory chain NADH dehydrogenase (Complex I) which is composed of 45 different subunits. Interacts with TMEM242.

Its subcellular location is the mitochondrion inner membrane. It catalyses the reaction a ubiquinone + NADH + 5 H(+)(in) = a ubiquinol + NAD(+) + 4 H(+)(out). Core subunit of the mitochondrial membrane respiratory chain NADH dehydrogenase (Complex I) which catalyzes electron transfer from NADH through the respiratory chain, using ubiquinone as an electron acceptor. Essential for the catalytic activity and assembly of complex I. The protein is NADH-ubiquinone oxidoreductase chain 2 of Martes zibellina (Sable).